Consider the following 265-residue polypeptide: Very long chain fatty acid elongase 6 (265 aa).

Asn-2 is a glycosylation site (N-linked (GlcNAc...) asparagine). 7 helical membrane-spanning segments follow: residues 34–51, 70–90, 111–131, 136–156, 159–179, 197–217, and 232–252; these read FLFSALYAAFIFGGRHLM, LAVFSIFGALRTGAYMVYILM, FWAYAFVLSKAPELGDTIFII, KLIFLHWYHHITVLLYSWYSY, MVAGGGWFMTMNYGVHAVMYS, FITLSQITQMLMGCVVNYLVF, and IFWSSLMYLSYLVLFCHFFFE.

Belongs to the ELO family. ELOVL6 subfamily. Post-translationally, N-Glycosylated. As to expression, ubiquitous.

It is found in the endoplasmic reticulum membrane. The catalysed reaction is a very-long-chain acyl-CoA + malonyl-CoA + H(+) = a very-long-chain 3-oxoacyl-CoA + CO2 + CoA. It catalyses the reaction hexadecanoyl-CoA + malonyl-CoA + H(+) = 3-oxooctadecanoyl-CoA + CO2 + CoA. It carries out the reaction (9Z)-hexadecenoyl-CoA + malonyl-CoA + H(+) = 3-oxo-(11Z)-octadecenoyl-CoA + CO2 + CoA. The enzyme catalyses dodecanoyl-CoA + malonyl-CoA + H(+) = 3-oxotetradecanoyl-CoA + CO2 + CoA. The catalysed reaction is tetradecanoyl-CoA + malonyl-CoA + H(+) = 3-oxohexadecanoyl-CoA + CO2 + CoA. It catalyses the reaction (9Z)-octadecenoyl-CoA + malonyl-CoA + H(+) = 3-oxo-(11Z)-eicosenoyl-CoA + CO2 + CoA. It carries out the reaction (9Z,12Z)-octadecadienoyl-CoA + malonyl-CoA + H(+) = (11Z,14Z)-3-oxoicosa-11,14-dienoyl-CoA + CO2 + CoA. The enzyme catalyses (9Z,12Z,15Z)-octadecatrienoyl-CoA + malonyl-CoA + H(+) = (11Z,14Z,17Z)-3-oxoeicosatrienoyl-CoA + CO2 + CoA. The protein operates within lipid metabolism; fatty acid biosynthesis. Its activity is regulated as follows. The reaction is stimulated by the presence of HSD17B12, the enzyme catalyzing the second step of the elongation cycle. Functionally, catalyzes the first and rate-limiting reaction of the four reactions that constitute the long-chain fatty acids elongation cycle. This endoplasmic reticulum-bound enzymatic process allows the addition of 2 carbons to the chain of long- and very long-chain fatty acids (VLCFAs) per cycle. Condensing enzyme that elongates fatty acids with 12, 14 and 16 carbons with higher activity toward C16:0 acyl-CoAs. Catalyzes the synthesis of unsaturated C16 long chain fatty acids and, to a lesser extent, C18:0 and those with low desaturation degree. May participate in the production of saturated and monounsaturated VLCFAs of different chain lengths that are involved in multiple biological processes as precursors of membrane lipids and lipid mediators. In Homo sapiens (Human), this protein is Very long chain fatty acid elongase 6.